A 420-amino-acid polypeptide reads, in one-letter code: Senescence-associated protein SPA15, chloroplastic (420 aa).

A chloroplast-targeting transit peptide spans Met1–Arg68. The segment at Glu85–Pro111 is disordered.

The protein belongs to the ATA15/OSA15 family. In terms of tissue distribution, expressed in leaves.

The protein localises to the plastid. Its subcellular location is the chloroplast. May be involved in the regulation of leaf senescence. This is Senescence-associated protein SPA15, chloroplastic from Ipomoea batatas (Sweet potato).